The sequence spans 782 residues: MKISSGAINFSTIPNQVKKLITSIREHTKNGLASKITSVKNTHTSLNEKFKTGKDSPIEFALPQKIKDFFQPKDKNTLNKTLITVKNIKDTNNAGKKNISAEDVSKMNAAFMRKHIANQTCDYNYRMTGAAPLPGGVSVSANNRPTVSEGRTPPVSPSLSLQATSSPSSPADWAKKLTDAVLRQKAGETLTAADRDFSNADFRNITFSKILPPSFMERDGDIIKGFNFSNSKFTYSDISHLHFDECRFTYSTLSDVVCSNTKFSNSDMNEVVLQYSITTQQQPSFIHTTLKNTLIRHKANLSGVILNEPHNSSPPSVSGGGNFIRLGDIWLQMPLLWTENAVDGFLNHEHNNGKSILMTIDSLPDKYSQEKVQAMEDLVKSLRGGRLTEACIRPVESSLVSVLAHPPYTQSALIREWLGPVQERFFAHQCQTYNDVPLPTPDTYYQQRILPVLLDSFDRNSAAMTTHSGLFNQVILHCMTGVDCTDGTRQKAAALYEQYLAHPAVSPHIHNGLFGNYDGSSDWTTRAADNFLLLSSQDSDTAMMLSTDTLLTMLNPTPDTAWDNFYLQRAGENVSTAQISPVELFRHDFPVFLAAFNQQATQRRFGELIDIILSTEEHGELNQQFLAATNQKHSTVKLIDDASVSRLATIFDPLLPEGKLSPAHYQHILSAYHLTDATPQKQAETLFCLSTAFARYSSSAIFGTEHDSPPALRGYAEALMQKAWELSPAIFPTSEQFTDWSDRFHGLHGAFTCTCVVADSMQRHARKYFPSVLSSILPLSWA.

Residues 137-171 (VSVSANNRPTVSEGRTPPVSPSLSLQATSSPSSPA) form a disordered region. Residues 157-171 (PSLSLQATSSPSSPA) show a composition bias toward low complexity. Cys-753 (glycyl thioester intermediate) is an active-site residue.

The protein belongs to the SopA E3 ligase family. In terms of processing, ubiquitinated in the presence of host E1 ubiquitin-activating enzyme, E2 ubiquitin-conjugating enzyme and ubiquitin.

It is found in the secreted. It localises to the host mitochondrion. The catalysed reaction is S-ubiquitinyl-[E2 ubiquitin-conjugating enzyme]-L-cysteine + [acceptor protein]-L-lysine = [E2 ubiquitin-conjugating enzyme]-L-cysteine + N(6)-ubiquitinyl-[acceptor protein]-L-lysine.. In terms of biological role, effector proteins function to alter host cell physiology and promote bacterial survival in host tissues. This protein is an E3 ubiquitin ligase that interferes with host's ubiquitination pathway. Required for inducing polymorphonuclear leukocytes migration across the intestinal epithelium. The polypeptide is E3 ubiquitin-protein ligase SopA (sopA) (Salmonella dublin).